The following is a 2136-amino-acid chain: MADVTARSLQYEYKANSNLVLQADRSLIDRTRRDEPTGEVLSLVGKLEGTRMGDKAQRTKPQMQEERRAKRRKRDEDRHDINKMKGYTLLSEGIDEMVGIIYKPKTKETRETYEVLLSFIQAALGDQPRDILCGAADEVLAVLKNEKLRDKERRKEIDLLLGQTDDTRYHVLVNLGKKITDYGGDKEIQNMDDNIDETYGVNVQFESDEEEGDEDVYGEVREEASDDDMEGDEAVVRCTLSANLVASGELMSSKKKDLHPRDIDAFWLQRQLSRFYDDAIVSQKKADEVLEILKTASDDRECENQLVLLLGFNTFDFIKVLRQHRMMILYCTLLASAQSEAEKERIMGKMEADPELSKFLYQLHETEKEDLIREERSRRERVRQSRMDTDLETMDLDQGGEALAPRQVLDLEDLVFTQGSHFMANKRCQLPDGSFRRQRKGYEEVHVPALKPKPFGSEEQLLPVEKLPKYAQAGFEGFKTLNRIQSKLYRAALETDENLLLCAPTGAGKTNVALMCMLREIGKHINMDGTINVDDFKIIYIAPMRSLVQEMVGSFGKRLATYGITVAELTGDHQLCKEEISATQIIVCTPEKWDIITRKGGERTYTQLVRLIILDEIHLLHDDRGPVLEALVARAIRNIEMTQEDVRLIGLSATLPNYEDVATFLRVDPAKGLFYFDNSFRPVPLEQTYVGITEKKAIKRFQIMNEIVYEKIMEHAGKNQVLVFVHSRKETGKTARAIRDMCLEKDTLGLFLREGSASTEVLRTEAEQCKNLELKDLLPYGFAIHHAGMTRVDRTLVEDLFADKHIQVLVSTATLAWGVNLPAHTVIIKGTQVYSPEKGRWTELGALDILQMLGRAGRPQYDTKGEGILITSHGELQYYLSLLNQQLPIESQMVSKLPDMLNAEIVLGNVQNAKDAVNWLGYAYLYIRMLRSPTLYGISHDDLKGDPLLDQRRLDLVHTAALMLDKNNLVKYDKKTGNFQVTELGRIASHYYITNDTVQTYNQLLKPTLSEIELFRVFSLSSEFKNITVREEEKLELQKLLERVPIPVKESIEEPSAKINVLLQAFISQLKLEGFALMADMVYVTQSAGRLMRAIFEIVLNRGWAQLTDKTLNLCKMIDKRMWQSMCPLRQFRKLPEEVVKKIEKKNFPFERLYDLNHNEIGELIRMPKMGKTIHKYVHLFPKLELSVHLQPITRSTLKVELTITPDFQWDEKVHGSSEAFWILVEDVDSEVILHHEYFLLKAKYAQDEHLITFFVPVFEPLPPQYFIRVVSDRWLSCETQLPVSFRHLILPEKYPPPTELLDLQPLPVSALRNSAFESLYQDKFPFFNPIQTQVFNTVYNSDDNVFVGAPTGSGKTICAEFAILRMLLQSSEGRCVYITPMEALAEQVYMDWYEKFQDRLNKKVVLLTGETSTDLKLLGKGNIIISTPEKWDILSRRWKQRKNVQNINLFVVDEVHLIGGENGPVLEVICSRMRYISSQIERPIRIVALSSSLSNAKDVAHWLGCSATSTFNFHPNVRPVPLELHIQGFNISHTQTRLLSMAKPVYHAITKHSPKKPVIVFVPSRKQTRLTAIDILTTCAADIQRQRFLHCTEKDLIPYLEKLSDSTLKETLLNGVGYLHEGLSPMERRLVEQLFSSGAIQVVVASRSLCWGMNVAAHLVIIMDTQYYNGKIHAYVDYPIYDVLQMVGHANRPLQDDEGRCVIMCQGSKKDFFKKFLYEPLPVESHLDHCMHDHFNAEIVTKTIENKQDAVDYLTWTFLYRRMTQNPNYYNLQGISHRHLSDHLSELVEQTLSDLEQSKCISIEDEMDVAPLNLGMIAAYYYINYTTIELFSMSLNAKTKVRGLIEIISNAAEYENIPIRHHEDNLLRQLAQKVPHKLNNPKFNDPHVKTNLLLQAHLSRMQLSAELQSDTEEILSKAIRLIQACVDVLSSNGWLSPALAAMELAQMVTQAMWSKDSYLKQLPHFTSEHIKRCTDKGVESVFDIMEMEDEERNALLQLTDSQIADVARFCNRYPNIELSYEVVDKDSIRSGGPVVVLVQLEREEEVTGPVIAPLFPQKREEGWWVVIGDAKSNSLISIKRLTLQQKAKVKLDFVAPATGAHNYTLYFMSDAYMGCDQEYKFSVDVKEAETDSDSD.

2 positions are modified to phosphoserine: Ser-17 and Ser-26. Lys-46 participates in a covalent cross-link: Glycyl lysine isopeptide (Lys-Gly) (interchain with G-Cter in SUMO2). Residues 50-80 form a disordered region; it reads TRMGDKAQRTKPQMQEERRAKRRKRDEDRHD. Residues 54–84 are a coiled coil; the sequence is DKAQRTKPQMQEERRAKRRKRDEDRHDINKM. Residue Ser-225 is modified to Phosphoserine. A Phosphothreonine modification is found at Thr-389. The segment at 395–2129 is interaction with C9orf78 and WBP4; that stretch reads DLDQGGEALA…YKFSVDVKEA (1735 aa). Residues 490–673 form the Helicase ATP-binding 1 domain; it reads RAALETDENL…FLRVDPAKGL (184 aa). 503 to 510 contacts ATP; it reads APTGAGKT. Residues 615–618 carry the DEIH box motif; the sequence is DEIH. The Helicase C-terminal 1 domain occupies 684–921; it reads PLEQTYVGIT…NAKDAVNWLG (238 aa). Tyr-709 is subject to Phosphotyrosine. Lys-971 bears the N6-acetyllysine mark. The 306-residue stretch at 981–1286 folds into the SEC63 1 domain; the sequence is VTELGRIASH…SCETQLPVSF (306 aa). The segment at 1282-2136 is interaction with TSSC4; sequence LPVSFRHLIL…KEAETDSDSD (855 aa). The Helicase ATP-binding 2 domain occupies 1337–1512; it reads NTVYNSDDNV…WLGCSATSTF (176 aa). 1350 to 1357 contacts ATP; it reads APTGSGKT. Thr-1428 bears the Phosphothreonine mark. A DEVH box motif is present at residues 1454 to 1457; sequence DEVH. The Helicase C-terminal 2 domain occupies 1545 to 1753; that stretch reads PVYHAITKHS…TIENKQDAVD (209 aa). Residue Thr-1765 is modified to Phosphothreonine. The region spanning 1812–2124 is the SEC63 2 domain; sequence PLNLGMIAAY…GCDQEYKFSV (313 aa). Ser-2002 is subject to Phosphoserine. A Phosphothreonine modification is found at Thr-2131. Phosphoserine occurs at positions 2133 and 2135.

This sequence belongs to the helicase family. SKI2 subfamily. Component of a core complex containing at least PRPF8, SNRNP200, EFTUD2 and SNRNP40. Component of the U5 snRNP and U4/U6-U5 tri-snRNP complexes, building blocks of the spliceosome. Component of the U4/U6-U5 tri-snRNP complex composed of the U4, U6 and U5 snRNAs and at least PRPF3, PRPF4, PRPF6, PRPF8, PRPF31, SNRNP200, TXNL4A, SNRNP40, DDX23, CD2BP2, PPIH, SNU13, EFTUD2, SART1 and USP39. Component of precatalytic, catalytic and postcatalytic spliceosomal complexes. Component of the minor spliceosome, which splices U12-type introns. Interacts with C9orf78; the interaction is direct and mutually exclusive with its interaction with WBP4. Interacts with WBP4; the interaction is mutually exclusive with its interaction with C9orf78. Interacts with PRPF8. Interacts with TSSC4; the interaction is direct, excludes recruitment of C9ORF78 and WBP4 to SNRNP200 and negatively regulates its RNA helicase activity. In terms of tissue distribution, widely expressed.

The protein resides in the nucleus. The enzyme catalyses ATP + H2O = ADP + phosphate + H(+). In terms of biological role, catalyzes the ATP-dependent unwinding of U4/U6 RNA duplices, an essential step in the assembly of a catalytically active spliceosome. Plays a role in pre-mRNA splicing as a core component of precatalytic, catalytic and postcatalytic spliceosomal complexes. As a component of the minor spliceosome, involved in the splicing of U12-type introns in pre-mRNAs. Involved in spliceosome assembly, activation and disassembly. Mediates changes in the dynamic network of RNA-RNA interactions in the spliceosome. The protein is U5 small nuclear ribonucleoprotein 200 kDa helicase (SNRNP200) of Homo sapiens (Human).